A 612-amino-acid polypeptide reads, in one-letter code: Amyloid-beta precursor-like protein (612 aa).

The first 21 residues, 1–21 (MGPSVRPGFLVVVIGLQFVAA), serve as a signal peptide directing secretion. At 22 to 542 (SMEVNSRKFE…NLYANSHANS (521 aa)) the chain is on the extracellular side. The GFLD subdomain stretch occupies residues 28-122 (RKFEPMVAFI…PFRCLVGPFQ (95 aa)). The 162-residue stretch at 28-189 (RKFEPMVAFI…SGVEFVCCPK (162 aa)) folds into the E1 domain. Disulfide bonds link Cys38-Cys60, Cys71-Cys116, Cys96-Cys103, Cys132-Cys187, Cys143-Cys173, and Cys157-Cys186. 3 N-linked (GlcNAc...) asparagine glycosylation sites follow: Asn99, Asn108, and Asn150. The interval 130 to 189 (EHCIFDHYHDPRVCNEFDQCNETAMSKCSARGMTTQSFAMLWPCQEPGHFSGVEFVCCPK) is cuBD subdomain. The 197-residue stretch at 223–419 (GDSKYMSKYA…KQVRPNIDKF (197 aa)) folds into the E2 domain. 2 disordered regions span residues 251–276 (ERDT…TDPK) and 437–490 (QEPT…FDSE). 2 stretches are compositionally biased toward basic and acidic residues: residues 439–453 (PTPK…KAED) and 470–483 (KPTE…EDIK). Residues 543-563 (VLGIAIGGVVVFIIIVVAVVM) traverse the membrane as a helical segment. Residues 564–612 (LKRRTQRQRVTHGFVEVDPAASPEERHVANMQMSGYENPTYKYFEMQNQ) lie on the Cytoplasmic side of the membrane. A required for the interaction with kinesin heavy chain and for anterograde transport in axons region spans residues 598-612 (GYENPTYKYFEMQNQ). The YENPXY motif signature appears at 599-604 (YENPTY).

This sequence belongs to the APP family. As to quaternary structure, interacts (via cytoplasmic domain) with kinesin heavy chain. In terms of tissue distribution, expressed in the cervicothoracic ganglion (stellate ganglion) (at protein level).

The protein localises to the cell membrane. The protein resides in the cell projection. Its subcellular location is the axon. In terms of biological role, acts as a kinesin I membrane receptor, thereby playing a role in axonal anterograde transport of cargo towards synapses in axons. In Doryteuthis pealeii (Longfin inshore squid), this protein is Amyloid-beta precursor-like protein.